We begin with the raw amino-acid sequence, 267 residues long: 2-keto-3-deoxy-L-rhamnonate aldolase (267 aa).

The Proton acceptor role is filled by His-49. Substrate is bound at residue Gln-151. Position 153 (Glu-153) interacts with Mg(2+). Positions 178 and 179 each coordinate substrate. Mg(2+) is bound at residue Asp-179.

The protein belongs to the HpcH/HpaI aldolase family. KDR aldolase subfamily. In terms of assembly, homohexamer. The cofactor is Mg(2+).

It carries out the reaction 2-dehydro-3-deoxy-L-rhamnonate = (S)-lactaldehyde + pyruvate. Catalyzes the reversible retro-aldol cleavage of 2-keto-3-deoxy-L-rhamnonate (KDR) to pyruvate and lactaldehyde. The polypeptide is 2-keto-3-deoxy-L-rhamnonate aldolase (Salmonella typhi).